Reading from the N-terminus, the 404-residue chain is Protein L-Myc-1b (404 aa).

Disordered regions lie at residues Lys-175–Asp-195 and Gln-238–Arg-331. Residues Val-287 to Ser-315 show a composition bias toward polar residues. Positions Asp-321–Leu-373 constitute a bHLH domain. Residues Leu-373–Leu-401 are leucine-zipper.

In terms of assembly, efficient DNA binding requires dimerization with another bHLH protein. Binds DNA as a heterodimer with max.

The protein localises to the nucleus. In Danio rerio (Zebrafish), this protein is Protein L-Myc-1b.